Consider the following 364-residue polypeptide: UDP-3-O-acylglucosamine N-acyltransferase (364 aa).

Catalysis depends on H257, which acts as the Proton acceptor.

This sequence belongs to the transferase hexapeptide repeat family. LpxD subfamily. As to quaternary structure, homotrimer.

The catalysed reaction is a UDP-3-O-[(3R)-3-hydroxyacyl]-alpha-D-glucosamine + a (3R)-hydroxyacyl-[ACP] = a UDP-2-N,3-O-bis[(3R)-3-hydroxyacyl]-alpha-D-glucosamine + holo-[ACP] + H(+). The protein operates within bacterial outer membrane biogenesis; LPS lipid A biosynthesis. Functionally, catalyzes the N-acylation of UDP-3-O-acylglucosamine using 3-hydroxyacyl-ACP as the acyl donor. Is involved in the biosynthesis of lipid A, a phosphorylated glycolipid that anchors the lipopolysaccharide to the outer membrane of the cell. The protein is UDP-3-O-acylglucosamine N-acyltransferase of Paracoccus denitrificans (strain Pd 1222).